A 1368-amino-acid chain; its full sequence is Mediator of RNA polymerase II transcription subunit 23 (1368 aa).

Residues 1343–1368 form a disordered region; that stretch reads VPPQAMNSGSPAPQSNQVPVSLPVTQ. Polar residues predominate over residues 1347 to 1368; it reads AMNSGSPAPQSNQVPVSLPVTQ.

The protein belongs to the Mediator complex subunit 23 family. In terms of assembly, interacts with ELK1. Component of the Mediator complex, which is composed of MED1, MED4, MED6, MED7, MED8, MED9, MED10, MED11, MED12, MED13, MED13L, MED14, MED15, MED16, MED17, MED18, MED19, MED20, MED21, MED22, MED23, MED24, MED25, MED26, MED27, MED29, MED30, MED31, CCNC, CDK8 and CDC2L6/CDK11. The MED12, MED13, CCNC and CDK8 subunits form a distinct module termed the CDK8 module. Mediator containing the CDK8 module is less active than Mediator lacking this module in supporting transcriptional activation. Individual preparations of the Mediator complex lacking one or more distinct subunits have been variously termed ARC, CRSP, DRIP, PC2, SMCC and TRAP. Interacts with CEBPB (when not methylated), CTNNB1, and GLI3. Interacts with the adenovirus E1A protein.

Its subcellular location is the nucleus. Required for transcriptional activation subsequent to the assembly of the pre-initiation complex. Component of the Mediator complex, a coactivator involved in the regulated transcription of nearly all RNA polymerase II-dependent genes. Mediator functions as a bridge to convey information from gene-specific regulatory proteins to the basal RNA polymerase II transcription machinery. Mediator is recruited to promoters by direct interactions with regulatory proteins and serves as a scaffold for the assembly of a functional pre-initiation complex with RNA polymerase II and the general transcription factors. Required for transcriptional activation by adenovirus E1A protein. Required for ELK1-dependent transcriptional activation in response to activated Ras signaling. The polypeptide is Mediator of RNA polymerase II transcription subunit 23 (MED23) (Homo sapiens (Human)).